Consider the following 184-residue polypeptide: CASP-like protein 1U2 (184 aa).

Residues 1–16 (MSYGCQVSDDEPNGSK) lie on the Cytoplasmic side of the membrane. A helical transmembrane segment spans residues 17–37 (AVSLLLRLSTLALALTSAVVM). The Extracellular portion of the chain corresponds to 38–62 (ATASECTVVQLNGVVATITYKDFPP). Residues 63–83 (FVYLVGFNIAAAMLEAAAIYL) traverse the membrane as a helical segment. Residues 84–100 (RLSTGGGDDDDEGFKGK) are Cytoplasmic-facing. A helical transmembrane segment spans residues 101–121 (LPGILLVVIDVAVQALVYTAT). Over 122 to 153 (GGAFAAVSAYGPQINACGAGAGRFCGQVHQSK) the chain is Extracellular. Residues 154–174 (LLSFAGSAAVGLAVVFRDVSL) form a helical membrane-spanning segment. At 175–184 (PFSLWPTSSD) the chain is on the cytoplasmic side.

This sequence belongs to the Casparian strip membrane proteins (CASP) family. In terms of assembly, homodimer and heterodimers.

The protein resides in the cell membrane. This is CASP-like protein 1U2 from Oryza sativa subsp. japonica (Rice).